The primary structure comprises 358 residues: Glucose 1-dehydrogenase (358 aa).

Residue cysteine 38 coordinates Zn(2+). Threonine 40 contacts substrate. Zn(2+) contacts are provided by histidine 65, glutamate 66, cysteine 92, cysteine 95, cysteine 98, and cysteine 106. 3 residues coordinate substrate: glutamate 113, glutamate 149, and asparagine 153. Glutamate 149 provides a ligand contact to Zn(2+). Residues 187–190 (SGPI), 209–211 (NRR), 268–270 (FGT), 296–298 (SVN), and lysine 342 each bind NADP(+). Asparagine 298 provides a ligand contact to substrate.

This sequence belongs to the zinc-containing alcohol dehydrogenase family. Glucose 1-dehydrogenase subfamily. Requires Zn(2+) as cofactor.

It catalyses the reaction D-glucose + NAD(+) = D-glucono-1,5-lactone + NADH + H(+). It carries out the reaction D-glucose + NADP(+) = D-glucono-1,5-lactone + NADPH + H(+). Functionally, catalyzes the NAD(P)(+)-dependent oxidation of D-glucose to D-gluconate via gluconolactone. Can utilize both NAD(+) and NADP(+) as electron acceptor. Is involved in the degradation of glucose through a non-phosphorylative variant of the Entner-Doudoroff pathway. The chain is Glucose 1-dehydrogenase from Metallosphaera sedula (strain ATCC 51363 / DSM 5348 / JCM 9185 / NBRC 15509 / TH2).